Reading from the N-terminus, the 595-residue chain is D-xylonate dehydratase (595 aa).

Cys64 lines the [2Fe-2S] cluster pocket. Glu96 serves as a coordination point for Mg(2+). Residue Cys132 participates in [2Fe-2S] cluster binding. Position 133 (Asp133) interacts with Mg(2+). Position 205 (Cys205) interacts with [2Fe-2S] cluster. Glu467 serves as a coordination point for Mg(2+).

This sequence belongs to the IlvD/Edd family. In terms of assembly, homotetramer. The cofactor is [2Fe-2S] cluster. Mg(2+) serves as cofactor.

It carries out the reaction D-xylonate = 2-dehydro-3-deoxy-D-arabinonate + H2O. The catalysed reaction is D-gluconate = 2-dehydro-3-deoxy-D-gluconate + H2O. It functions in the pathway carbohydrate metabolism; D-xylose degradation. Its function is as follows. Catalyzes the dehydration of D-xylonate to 2-dehydro-3-deoxy-D-arabinonate during D-xylose degradation. Can also dehydrate D-gluconate, with similar catalytic efficiency. Has weak activity with D-galactonate, D-fuconate and L-arabinonate. The chain is D-xylonate dehydratase from Caulobacter vibrioides (strain ATCC 19089 / CIP 103742 / CB 15) (Caulobacter crescentus).